The following is a 305-amino-acid chain: RxLR effector protein PexRD25 (305 aa).

The N-terminal stretch at 1-16 (MRFLFYMLLACSAVVA) is a signal peptide. Residues 44-56 (RLLRDRRSVDEER) carry the RxLR-dEER motif.

This sequence belongs to the RxLR effector family.

The protein resides in the secreted. It localises to the host nucleus. Its subcellular location is the host nucleolus. Effector that enhances P.infestans colonization of Nicotiana benthamiana leaves. The protein is RxLR effector protein PexRD25 of Phytophthora infestans (strain T30-4) (Potato late blight agent).